Reading from the N-terminus, the 388-residue chain is Phosphoglycerate kinase (388 aa).

Substrate contacts are provided by residues 24 to 26 (DLN), R37, 56 to 59 (RGGR), R117, and R165. The disordered stretch occupies residues 26 to 136 (NVPLDSDGEQ…RRPRNVQGRR (111 aa)). Residues 34–55 (EQGRITDPGPDHRVGADVERTG) show a composition bias toward basic and acidic residues. Residues 102-136 (GGHRRPGPRRGVDRRRRPAAGKHPVRRPRNVQGRR) are compositionally biased toward basic residues. ATP contacts are provided by residues K215, G303, E334, and 363–366 (GGDS).

It belongs to the phosphoglycerate kinase family. Monomer.

The protein resides in the cytoplasm. It catalyses the reaction (2R)-3-phosphoglycerate + ATP = (2R)-3-phospho-glyceroyl phosphate + ADP. It participates in carbohydrate degradation; glycolysis; pyruvate from D-glyceraldehyde 3-phosphate: step 2/5. The polypeptide is Phosphoglycerate kinase (pgk) (Mycobacterium avium).